A 101-amino-acid polypeptide reads, in one-letter code: uncharacterized protein (101 aa).

The signal sequence occupies residues 1–25 (MRKKRLLSRISFSSLFLLCGTLLSA). A lipid anchor (N-palmitoyl cysteine) is attached at cysteine 26. Cysteine 26 carries S-diacylglycerol cysteine lipidation.

It belongs to the MG439/MG440 family.

It localises to the cell membrane. This is an uncharacterized protein from Mycoplasma pneumoniae (strain ATCC 29342 / M129 / Subtype 1) (Mycoplasmoides pneumoniae).